Consider the following 957-residue polypeptide: Kinesin heavy chain isoform 5C (957 aa).

One can recognise a Kinesin motor domain in the interval 8-327; it reads SIKVMCRFRP…LMFGQRAKTI (320 aa). ATP contacts are provided by Gln87, Ser89, Ser90, Gly91, Lys92, Thr93, His94, and Lys99. Positions 174-315 are microtubule-binding; sequence VSSPEEVMDV…PSVFNEAETK (142 aa). Residues 406–923 are a coiled coil; that stretch reads VAGISTEEKE…ARRAHSAQIA (518 aa). The tract at residues 859–956 is globular; sequence RCELPKLEKR…GSSSNSTHYQ (98 aa). The segment at 911–957 is disordered; that stretch reads KNMARRAHSAQIAKPIRPGHYPASSPTAVHAIRGGGGSSSNSTHYQK.

This sequence belongs to the TRAFAC class myosin-kinesin ATPase superfamily. Kinesin family. Kinesin subfamily. Oligomer composed of two heavy chains and two light chains. Interacts with GRIP1 and KLC3. Interacts with TRAK1. Interacts with ZFYVE27. In terms of tissue distribution, highest expression in brain, prostate and testis, and moderate expression in kidney, small intestine and ovary.

Its subcellular location is the cytoplasm. It is found in the cytoskeleton. The protein localises to the cell projection. The protein resides in the dendrite. It catalyses the reaction ATP + H2O = ADP + phosphate + H(+). Microtubule-associated force-producing protein that may play a role in organelle transport. Has ATPase activity. Involved in synaptic transmission. Mediates dendritic trafficking of mRNAs. Required for anterograde axonal transportation of MAPK8IP3/JIP3 which is essential for MAPK8IP3/JIP3 function in axon elongation. The protein is Kinesin heavy chain isoform 5C (KIF5C) of Homo sapiens (Human).